A 393-amino-acid polypeptide reads, in one-letter code: Synaptic vesicle membrane protein VAT-1 homolog (393 aa).

A disordered region spans residues methionine 1–alanine 40. An N-acetylserine modification is found at serine 2. A phosphoserine mark is found at serine 2, serine 18, serine 27, serine 35, and serine 44.

This sequence belongs to the zinc-containing alcohol dehydrogenase family. Quinone oxidoreductase subfamily. Expressed in brain. Also expressed in glioblastoma cells.

Its subcellular location is the cytoplasm. It is found in the mitochondrion outer membrane. Functionally, possesses ATPase activity. Plays a part in calcium-regulated keratinocyte activation in epidermal repair mechanisms. Has no effect on cell proliferation. Negatively regulates mitochondrial fusion in cooperation with mitofusin proteins (MFN1-2). In Homo sapiens (Human), this protein is Synaptic vesicle membrane protein VAT-1 homolog (VAT1).